The following is a 176-amino-acid chain: Isopentenyl-diphosphate Delta-isomerase (176 aa).

Positions 24 and 30 each coordinate Mn(2+). The Nudix hydrolase domain maps to 28–160 (LLHRAFSIFV…PSAFTVWFHC (133 aa)). The active site involves C65. Residue H67 coordinates Mn(2+). E85 is a Mg(2+) binding site. Mn(2+)-binding residues include E110 and E112. The active site involves E112.

This sequence belongs to the IPP isomerase type 1 family. Mg(2+) is required as a cofactor. Requires Mn(2+) as cofactor.

The protein localises to the cytoplasm. The enzyme catalyses isopentenyl diphosphate = dimethylallyl diphosphate. The protein operates within isoprenoid biosynthesis; dimethylallyl diphosphate biosynthesis; dimethylallyl diphosphate from isopentenyl diphosphate: step 1/1. In terms of biological role, catalyzes the 1,3-allylic rearrangement of the homoallylic substrate isopentenyl (IPP) to its highly electrophilic allylic isomer, dimethylallyl diphosphate (DMAPP). This chain is Isopentenyl-diphosphate Delta-isomerase, found in Burkholderia multivorans (strain ATCC 17616 / 249).